The chain runs to 287 residues: Glycine--tRNA ligase alpha subunit (287 aa).

It belongs to the class-II aminoacyl-tRNA synthetase family. In terms of assembly, tetramer of two alpha and two beta subunits.

The protein localises to the cytoplasm. The catalysed reaction is tRNA(Gly) + glycine + ATP = glycyl-tRNA(Gly) + AMP + diphosphate. This chain is Glycine--tRNA ligase alpha subunit, found in Petrotoga mobilis (strain DSM 10674 / SJ95).